A 254-amino-acid polypeptide reads, in one-letter code: Persulfide dioxygenase ETHE1, mitochondrial (254 aa).

Residues M1 to R7 constitute a mitochondrion transit peptide. A phosphoserine mark is found at S14, S17, and S19. At K32 the chain carries N6-acetyllysine; alternate. The residue at position 32 (K32) is an N6-succinyllysine; alternate. K66 carries the post-translational modification N6-acetyllysine. 3 residues coordinate Fe cation: H79, H135, and D154. N6-acetyllysine; alternate is present on K172. The residue at position 172 (K172) is an N6-succinyllysine; alternate.

It belongs to the metallo-beta-lactamase superfamily. Glyoxalase II family. Homodimer. Monomer. Interacts with TST. May interact with RELA. The cofactor is Fe(2+).

It localises to the cytoplasm. The protein resides in the nucleus. Its subcellular location is the mitochondrion matrix. The enzyme catalyses S-sulfanylglutathione + O2 + H2O = sulfite + glutathione + 2 H(+). Functionally, first described as a protein that can shuttle between the nucleus and the cytoplasm and suppress p53-induced apoptosis by sequestering the transcription factor RELA/NFKB3 in the cytoplasm and preventing its accumulation in the nucleus. Sulfur dioxygenase that plays an essential role in hydrogen sulfide catabolism in the mitochondrial matrix. Hydrogen sulfide (H(2)S) is first oxidized by SQRDL, giving rise to cysteine persulfide residues. ETHE1 consumes molecular oxygen to catalyze the oxidation of the persulfide, once it has been transferred to a thiophilic acceptor, such as glutathione (R-SSH). Plays an important role in metabolic homeostasis in mitochondria by metabolizing hydrogen sulfide and preventing the accumulation of supraphysiological H(2)S levels that have toxic effects, due to the inhibition of cytochrome c oxidase. In Mus musculus (Mouse), this protein is Persulfide dioxygenase ETHE1, mitochondrial (Ethe1).